The chain runs to 639 residues: Polyphenol oxidase, chloroplastic (639 aa).

Residues 1–101 constitute a chloroplast transit peptide; it reads MATLSSPTII…EGANYYNTLA (101 aa). The disordered stretch occupies residues 35-58; sequence GVRSVNGKVSCQTKNNNGNDENNQ. 2 disulfide bridges follow: C111–C127 and C126–C194. Positions 193, 214, 223, 354, 358, and 388 each coordinate Cu cation. The segment at residues 197–214 is a cross-link (2'-(S-cysteinyl)-histidine (Cys-His)); that stretch reads CDGSYPVLGHNDTRLEVH.

The protein belongs to the tyrosinase family. Cu(2+) serves as cofactor.

The protein localises to the plastid. It is found in the chloroplast thylakoid lumen. The catalysed reaction is 2 catechol + O2 = 2 1,2-benzoquinone + 2 H2O. Functionally, catalyzes the oxidation of mono- and o-diphenols to o-diquinones. The polypeptide is Polyphenol oxidase, chloroplastic (Spinacia oleracea (Spinach)).